Here is a 516-residue protein sequence, read N- to C-terminus: Maturase K (516 aa).

It belongs to the intron maturase 2 family. MatK subfamily.

It is found in the plastid. It localises to the chloroplast. Its function is as follows. Usually encoded in the trnK tRNA gene intron. Probably assists in splicing its own and other chloroplast group II introns. This chain is Maturase K, found in Chara connivens (Convergent stonewort).